We begin with the raw amino-acid sequence, 151 residues long: S-protein homolog 1 (151 aa).

A signal peptide spans 1 to 18; that stretch reads MNCIKQFLLAICFSLALT.

It belongs to the plant self-incompatibility (S1) protein family. In terms of tissue distribution, restricted to floral tissues.

It is found in the secreted. The polypeptide is S-protein homolog 1 (Arabidopsis thaliana (Mouse-ear cress)).